Here is a 274-residue protein sequence, read N- to C-terminus: Peroxiredoxin-4 (274 aa).

The first 40 residues, 1-40 (MEARSKLLDGTTASRRWTRKLVLLLPPLLLFLLRTESLQG), serve as a signal peptide directing secretion. One can recognise a Thioredoxin domain in the interval 82–240 (AKISKPAPYW…TLRLVQAFQY (159 aa)). Catalysis depends on C127, which acts as the Cysteine sulfenic acid (-SOH) intermediate.

This sequence belongs to the peroxiredoxin family. AhpC/Prx1 subfamily. In terms of assembly, homodimer; disulfide-linked, upon oxidation. 5 homodimers assemble to form a ring-like decamer. In terms of processing, the enzyme can be inactivated by further oxidation of the cysteine sulfenic acid (C(P)-SOH) to sulphinic acid (C(P)-SO2H) and sulphonic acid (C(P)-SO3H) instead of its condensation to a disulfide bond.

The protein localises to the cytoplasm. The protein resides in the endoplasmic reticulum. The enzyme catalyses a hydroperoxide + [thioredoxin]-dithiol = an alcohol + [thioredoxin]-disulfide + H2O. Thiol-specific peroxidase that catalyzes the reduction of hydrogen peroxide and organic hydroperoxides to water and alcohols, respectively. Plays a role in cell protection against oxidative stress by detoxifying peroxides and as sensor of hydrogen peroxide-mediated signaling events. Regulates the activation of NF-kappa-B in the cytosol by a modulation of I-kappa-B-alpha phosphorylation. This Mus musculus (Mouse) protein is Peroxiredoxin-4 (Prdx4).